A 254-amino-acid chain; its full sequence is Alcohol dehydrogenase 1 (254 aa).

An NAD(+)-binding site is contributed by 10–33; the sequence is FVAGLGGIGFDTSREIVKSGPKNL. A substrate-binding site is contributed by Ser-138. The Proton acceptor role is filled by Tyr-151.

The protein belongs to the short-chain dehydrogenases/reductases (SDR) family. In terms of assembly, homodimer.

The enzyme catalyses a primary alcohol + NAD(+) = an aldehyde + NADH + H(+). It carries out the reaction a secondary alcohol + NAD(+) = a ketone + NADH + H(+). This Drosophila mulleri (Fruit fly) protein is Alcohol dehydrogenase 1 (Adh1).